Here is a 243-residue protein sequence, read N- to C-terminus: Endochitinase (243 aa).

Disulfide bonds link cysteine 23–cysteine 85, cysteine 97–cysteine 105, and cysteine 223–cysteine 236. The active-site Proton donor is glutamate 67.

Its subcellular location is the vacuole. The enzyme catalyses Random endo-hydrolysis of N-acetyl-beta-D-glucosaminide (1-&gt;4)-beta-linkages in chitin and chitodextrins.. In terms of biological role, defense against chitin-containing fungal pathogens. Shows activity on chitin, tetra-N-acetylglucosamine and chitosan. This Carica papaya (Papaya) protein is Endochitinase.